The primary structure comprises 209 residues: High frequency lysogenization protein HflD homolog (209 aa).

The protein belongs to the HflD family.

The protein localises to the cytoplasm. The protein resides in the cell inner membrane. This is High frequency lysogenization protein HflD homolog from Sodalis glossinidius (strain morsitans).